A 640-amino-acid chain; its full sequence is LRR receptor kinase SERL2 (640 aa).

The N-terminal stretch at 1 to 22 (MEPPFFLLLLLLVVSSSSPSAA) is a signal peptide. The Extracellular portion of the chain corresponds to 23-241 (LLSAKGVNNE…AARDRGHKFA (219 aa)). N-linked (GlcNAc...) asparagine glycans are attached at residues N94 and N107. LRR repeat units lie at residues 95–119 (LTNL…IGRL), 120–143 (ENLK…VGHL), 145–167 (SLQY…SANL), and 168–191 (SHLV…LART). Residues N153, N166, N179, and N222 are each glycosylated (N-linked (GlcNAc...) asparagine). A helical transmembrane segment spans residues 242–262 (VAFGSTAGCMGLLLLAAGFLF). The Cytoplasmic portion of the chain corresponds to 263–640 (WWRHRRNRQI…VQAVELSGPR (378 aa)). Positions 304–583 (FSGKNILGKG…EGDGLADRWE (280 aa)) constitute a Protein kinase domain. Residues 310-318 (LGKGGFGNV) and K332 contribute to the ATP site. The active-site Proton acceptor is the D427.

The protein belongs to the protein kinase superfamily. Ser/Thr protein kinase family. In terms of assembly, interacts with MSBP1.

Its subcellular location is the cell membrane. It catalyses the reaction L-seryl-[protein] + ATP = O-phospho-L-seryl-[protein] + ADP + H(+). It carries out the reaction L-threonyl-[protein] + ATP = O-phospho-L-threonyl-[protein] + ADP + H(+). In terms of biological role, LRR receptor kinase that may be involved in defense response. The sequence is that of LRR receptor kinase SERL2 from Oryza sativa subsp. japonica (Rice).